A 510-amino-acid chain; its full sequence is NAD(P)H-quinone oxidoreductase subunit 2 A, chloroplastic (510 aa).

The next 12 helical transmembrane spans lie at 24–44 (LLLF…GLIL), 59–79 (WFYF…LFRW), 99–119 (IFQF…VEYI), 124–144 (MAIT…MFLC), 149–169 (LITL…LSGY), 183–203 (YLLM…WLYG), 229–249 (ISIA…PAPF), 295–315 (WHLL…LIAI), 323–343 (MLAY…IVGD), 354–374 (YMLF…SFGL), 395–415 (ALSL…AGFF), and 418–438 (LHLF…IGLL).

The protein belongs to the complex I subunit 2 family. NDH is composed of at least 16 different subunits, 5 of which are encoded in the nucleus.

It is found in the plastid. The protein localises to the chloroplast thylakoid membrane. It carries out the reaction a plastoquinone + NADH + (n+1) H(+)(in) = a plastoquinol + NAD(+) + n H(+)(out). It catalyses the reaction a plastoquinone + NADPH + (n+1) H(+)(in) = a plastoquinol + NADP(+) + n H(+)(out). NDH shuttles electrons from NAD(P)H:plastoquinone, via FMN and iron-sulfur (Fe-S) centers, to quinones in the photosynthetic chain and possibly in a chloroplast respiratory chain. The immediate electron acceptor for the enzyme in this species is believed to be plastoquinone. Couples the redox reaction to proton translocation, and thus conserves the redox energy in a proton gradient. This chain is NAD(P)H-quinone oxidoreductase subunit 2 A, chloroplastic, found in Dioscorea elephantipes (Elephant's foot yam).